Consider the following 512-residue polypeptide: GMP synthase [glutamine-hydrolyzing] (512 aa).

In terms of domain architecture, Glutamine amidotransferase type-1 spans 7-197; that stretch reads TIIVLDFGSQ…VFGVCGCSEG (191 aa). The active-site Nucleophile is cysteine 84. Catalysis depends on residues histidine 171 and glutamate 173. A GMPS ATP-PPase domain is found at 198 to 387; sequence WNMENFIEVE…LGIPDEIVWR (190 aa). 225-231 contacts ATP; sequence SGGVDSS.

In terms of assembly, homodimer.

It catalyses the reaction XMP + L-glutamine + ATP + H2O = GMP + L-glutamate + AMP + diphosphate + 2 H(+). It participates in purine metabolism; GMP biosynthesis; GMP from XMP (L-Gln route): step 1/1. Its function is as follows. Catalyzes the synthesis of GMP from XMP. The protein is GMP synthase [glutamine-hydrolyzing] of Bacillus cereus (strain B4264).